The sequence spans 111 residues: Cystatin (111 aa).

The region spanning 3–103 (GGLSPRDVTD…CRFEVWSRPW (101 aa)) is the Cystatin domain. Positions 47 to 51 (QVVSG) match the Secondary area of contact motif. Cysteine 65 and cysteine 81 are oxidised to a cystine.

This sequence belongs to the cystatin family. As to expression, expressed by the venom gland.

The protein resides in the secreted. In terms of biological role, inhibits various C1 cysteine proteases including cathepsin L, papain and cathepsin B. This protein has no toxic activity and its function in the venom is unknown. It may play a role as housekeeping or regulatory protein. In Bitis arietans (African puff adder), this protein is Cystatin.